The following is a 566-amino-acid chain: Arginine--tRNA ligase (566 aa).

The 'HIGH' region signature appears at 123–133; sequence PNIAKPFHIGH.

It belongs to the class-I aminoacyl-tRNA synthetase family. As to quaternary structure, monomer.

The protein localises to the cytoplasm. The enzyme catalyses tRNA(Arg) + L-arginine + ATP = L-arginyl-tRNA(Arg) + AMP + diphosphate. The polypeptide is Arginine--tRNA ligase (Clostridioides difficile (strain 630) (Peptoclostridium difficile)).